The primary structure comprises 307 residues: Ribonuclease Z (307 aa).

Positions 63, 65, 67, 68, 140, 211, and 269 each coordinate Zn(2+). The active-site Proton acceptor is aspartate 67.

The protein belongs to the RNase Z family. As to quaternary structure, homodimer. Zn(2+) is required as a cofactor.

It carries out the reaction Endonucleolytic cleavage of RNA, removing extra 3' nucleotides from tRNA precursor, generating 3' termini of tRNAs. A 3'-hydroxy group is left at the tRNA terminus and a 5'-phosphoryl group is left at the trailer molecule.. Zinc phosphodiesterase, which displays some tRNA 3'-processing endonuclease activity. Probably involved in tRNA maturation, by removing a 3'-trailer from precursor tRNA. This Geobacillus kaustophilus (strain HTA426) protein is Ribonuclease Z.